A 292-amino-acid polypeptide reads, in one-letter code: 4-hydroxybenzoate octaprenyltransferase (292 aa).

8 helical membrane passes run 20–40, 43–63, 94–114, 135–155, 160–180, 209–229, 234–254, and 266–286; these read IGIL…ADGM, PMIL…GCAI, LLIA…LNLL, FFAM…PMAF, GTVP…VIAY, VAGI…AGIL, IWFY…YGMI, and FLHN…DTLF.

Belongs to the UbiA prenyltransferase family. Requires Mg(2+) as cofactor.

Its subcellular location is the cell inner membrane. It carries out the reaction all-trans-octaprenyl diphosphate + 4-hydroxybenzoate = 4-hydroxy-3-(all-trans-octaprenyl)benzoate + diphosphate. It participates in cofactor biosynthesis; ubiquinone biosynthesis. In terms of biological role, catalyzes the prenylation of para-hydroxybenzoate (PHB) with an all-trans polyprenyl group. Mediates the second step in the final reaction sequence of ubiquinone-8 (UQ-8) biosynthesis, which is the condensation of the polyisoprenoid side chain with PHB, generating the first membrane-bound Q intermediate 3-octaprenyl-4-hydroxybenzoate. This Nitrosomonas europaea (strain ATCC 19718 / CIP 103999 / KCTC 2705 / NBRC 14298) protein is 4-hydroxybenzoate octaprenyltransferase.